The following is a 128-amino-acid chain: Large ribosomal subunit protein bL19 (128 aa).

It belongs to the bacterial ribosomal protein bL19 family.

This protein is located at the 30S-50S ribosomal subunit interface and may play a role in the structure and function of the aminoacyl-tRNA binding site. The chain is Large ribosomal subunit protein bL19 from Herminiimonas arsenicoxydans.